Here is a 70-residue protein sequence, read N- to C-terminus: uncharacterized protein (70 aa).

The segment at 40-70 is disordered; it reads LHQQRTAHKVTSPPSQRPQNSETKSDSQNRS. Over residues 51–61 the composition is skewed to polar residues; it reads SPPSQRPQNSE.

This is an uncharacterized protein from Bdellovibrio phage phiMH2K (Bacteriophage phiMH2K).